We begin with the raw amino-acid sequence, 154 residues long: Host transcription reprogramming factor 5 (154 aa).

Positions 1–19 (MQILRIAQLMALLATCASA) are cleaved as a signal peptide. Residues 24–85 (TGSRVYSRDV…KRIKAEQNAR (62 aa)) form a disordered region. Residues 35 to 50 (QTQGGFSGSPTTNSPD) show a composition bias toward polar residues. The span at 69–85 (ETEKERKKRIKAEQNAR) shows a compositional bias: basic and acidic residues. The C2H2-type; degenerate zinc-finger motif lies at 96–121 (YQCPYCSDPTVFSHSDALGRHIYTIH).

It is found in the secreted. The protein localises to the host nucleus. Its function is as follows. Probable secreted effector that translocates into the nuclei of host cells to reprogram the expression of targeted genes by binding on effector binding elements in rice. The protein is Host transcription reprogramming factor 5 of Pyricularia oryzae (strain 70-15 / ATCC MYA-4617 / FGSC 8958) (Rice blast fungus).